The primary structure comprises 227 residues: Phosphatidylethanolamine-binding protein 4 (227 aa).

Positions 1–22 (MGWTMRLVTAALLLGLMMVVTG) are cleaved as a signal peptide. Residue Asn-169 is glycosylated (N-linked (GlcNAc...) (complex) asparagine). Residues 188–227 (EPEASTQFMTQNYQDSPTLQAPRERASEPKHKNQAEIAAC) are important for secretion. The interval 202-227 (DSPTLQAPRERASEPKHKNQAEIAAC) is disordered. Residues 209-221 (PRERASEPKHKNQ) are compositionally biased toward basic and acidic residues.

Belongs to the phosphatidylethanolamine-binding protein family.

The protein localises to the secreted. Its function is as follows. Promotes AKT phosphorylation, suggesting a possible role in the PI3K-AKT signaling pathway. The polypeptide is Phosphatidylethanolamine-binding protein 4 (PEBP4) (Homo sapiens (Human)).